The sequence spans 884 residues: MSKELSPKYNPAEVEAGRYQTWLDQDVFKPSGDAEAKPYSIVIPPPNVTGKLHLGHAWDTTLQDIIIRQKRMQGFDTLWLPGMDHAGIATQAKVEERLREQGISRYDLGREKFLDKVWEWKDEYAATIKSQWGKMGLSVDYSRERFTLDEGLSKAVRKVFVDLYNRGWIYRGEFIINWDPAARTALSDIEVIHKDVEGAFYHMNYMLEDGSRALEVATTRPETMFGDVAVAVNPEDPRYKDLIGQNVILPIINKPIPIVADEHADPEFGTGVVKITPAHDPNDFAVGQRHNLPQVNVMNDDGTMNELADEFNGMDRFEARKAVVAKLESLGNLVKIEKMTHSVGHSERTGVVVEPRLSTQWFVKMDQLAKNAIANQDTEDKVEFYPPRFNDTFMSWMENVHDWVISRQLWWGHQIPAWYNVNGEMYVGEDAPEGDGWTQDEDVLDTWFSSALWPFSTMGWPDTEAADFKRYFPTSTLVTGYDIIFFWVSRMIFQSLEFTGRQPFSNVLIHGLIRDEEGRKMSKSLGNGIDPMDVIEKYGADALRWFLSNGSAPGQDVRFSYEKMDASWNFINKIWNISRYILMNNEGLTLDQARENVEKVVNSQVGNVTDRWILHNLNETVGKVTENFDKFEFGVAGHILYNFIWEEFANWYVELTKEVLYSDNEDEKVVTRSVLLYTLDQILRLLHPIMPFVTEEIFGQYAEGSIVLASYPQVNATFENQTAHKGVESLKDLIRSVRNSRAEVNVAPSKPITILVKTSDSELESFFKDNSNYIKRFTNPETLEISSAITAPELAMTSIITGAEIFLPLADLLNVEEELARLEKELAKWQKELNMVGKKLSNERFVANAKPEVVQKEKDKQTDYQTKYDATIARIEEMKKINND.

The 'HIGH' region signature appears at 46-56; sequence PNVTGKLHLGH. Residues 520–524 carry the 'KMSKS' region motif; it reads KMSKS. Lys523 is a binding site for ATP. Residues 809 to 844 adopt a coiled-coil conformation; sequence LADLLNVEEELARLEKELAKWQKELNMVGKKLSNER.

This sequence belongs to the class-I aminoacyl-tRNA synthetase family. ValS type 1 subfamily. As to quaternary structure, monomer.

The protein resides in the cytoplasm. The catalysed reaction is tRNA(Val) + L-valine + ATP = L-valyl-tRNA(Val) + AMP + diphosphate. Its function is as follows. Catalyzes the attachment of valine to tRNA(Val). As ValRS can inadvertently accommodate and process structurally similar amino acids such as threonine, to avoid such errors, it has a 'posttransfer' editing activity that hydrolyzes mischarged Thr-tRNA(Val) in a tRNA-dependent manner. This is Valine--tRNA ligase from Streptococcus agalactiae serotype Ia (strain ATCC 27591 / A909 / CDC SS700).